Here is a 397-residue protein sequence, read N- to C-terminus: Protein ROH1D (397 aa).

The chain crosses the membrane as a helical span at residues 247–267; the sequence is LIVPVYTMTTVLLFVMWALVA.

This sequence belongs to the ROH1 family. Interacts with EXO70C2. In terms of tissue distribution, mostly expressed in mature pollen.

It localises to the membrane. It is found in the cytoplasm. The protein resides in the cytosol. In terms of biological role, involved in the regulation of plant growth, and modulates pollen development to ensure male fertility. May also affect the composition of the inner seed coat mucilage layer. The chain is Protein ROH1D from Arabidopsis thaliana (Mouse-ear cress).